An 864-amino-acid chain; its full sequence is Structure-specific endonuclease subunit SLX4 (864 aa).

Disordered stretches follow at residues 1–21, 49–69, 91–113, 161–190, 289–318, 346–385, 413–433, and 625–767; these read MTTQ…PVIP, LSTS…KTQG, TGTG…PGNA, ANQT…GNDH, LSDD…NRPK, TLLS…NEPP, ANGH…ISNS, and KAPN…VTSS. The span at 295–306 shows a compositional bias: polar residues; it reads SSITEDSESATS. A compositionally biased stretch (basic residues) spans 307–318; sequence KPRRVKAKNRPK. Residues 656–668 are compositionally biased toward polar residues; sequence QPNSISQKATTQV. Over residues 685-695 the composition is skewed to low complexity; it reads VSSRRSTSTSK. Over residues 743–767 the composition is skewed to polar residues; the sequence is PESFNLPTTPLTIRSGKVPSTVTSS.

This sequence belongs to the SLX4 family. As to quaternary structure, forms a heterodimer with SLX1. Post-translationally, phosphorylated in response to DNA damage.

It localises to the nucleus. In terms of biological role, regulatory subunit of the SLX1-SLX4 structure-specific endonuclease that resolves DNA secondary structures generated during DNA repair and recombination. Has endonuclease activity towards branched DNA substrates, introducing single-strand cuts in duplex DNA close to junctions with ss-DNA. This chain is Structure-specific endonuclease subunit SLX4, found in Paracoccidioides lutzii (strain ATCC MYA-826 / Pb01) (Paracoccidioides brasiliensis).